Here is a 574-residue protein sequence, read N- to C-terminus: Kelch-like protein 35 (574 aa).

One can recognise a BTB domain in the interval threonine 40–alanine 110. The BACK domain maps to serine 146–glutamate 248. Kelch repeat units follow at residues valine 292–asparagine 341, isoleucine 343–glycine 385, glutamine 386–glycine 432, leucine 434–aspartate 480, threonine 481–glycine 522, and valine 524–glutamine 570.

This is Kelch-like protein 35 (Klhl35) from Mus musculus (Mouse).